The following is a 204-amino-acid chain: Leucyl/phenylalanyl-tRNA--protein transferase (204 aa).

This sequence belongs to the L/F-transferase family.

The protein localises to the cytoplasm. It carries out the reaction N-terminal L-lysyl-[protein] + L-leucyl-tRNA(Leu) = N-terminal L-leucyl-L-lysyl-[protein] + tRNA(Leu) + H(+). The enzyme catalyses N-terminal L-arginyl-[protein] + L-leucyl-tRNA(Leu) = N-terminal L-leucyl-L-arginyl-[protein] + tRNA(Leu) + H(+). The catalysed reaction is L-phenylalanyl-tRNA(Phe) + an N-terminal L-alpha-aminoacyl-[protein] = an N-terminal L-phenylalanyl-L-alpha-aminoacyl-[protein] + tRNA(Phe). Functions in the N-end rule pathway of protein degradation where it conjugates Leu, Phe and, less efficiently, Met from aminoacyl-tRNAs to the N-termini of proteins containing an N-terminal arginine or lysine. This is Leucyl/phenylalanyl-tRNA--protein transferase from Rhizobium johnstonii (strain DSM 114642 / LMG 32736 / 3841) (Rhizobium leguminosarum bv. viciae).